The chain runs to 60 residues: LKCHQLIPPFWKTCPEGKNLCYKMYMVATPMIPVKRGCIDVCPKNSALVKYMCCNTDKCN.

Disulfide bonds link Cys3-Cys21, Cys14-Cys38, Cys42-Cys53, and Cys54-Cys59.

The protein belongs to the three-finger toxin family. Short-chain subfamily. Type IA cytotoxin sub-subfamily. In terms of assembly, monomer in solution; Homodimer and oligomer in the presence of negatively charged lipids forming a pore with a size ranging between 20 and 30 Angstroms. As to expression, expressed by the venom gland.

Its subcellular location is the secreted. The protein localises to the target cell membrane. Shows cytolytic activity on many different cells by forming pore in lipid membranes. In vivo, increases heart rate or kills the animal by cardiac arrest. In addition, it binds to heparin with high affinity, interacts with Kv channel-interacting protein 1 (KCNIP1) in a calcium-independent manner, and binds to integrin alpha-V/beta-3 (ITGAV/ITGB3) with moderate affinity. In Naja nivea (Cape cobra), this protein is Cytotoxin 2.